A 43-amino-acid chain; its full sequence is Lanthionine-containing peptide SapB (43 aa).

Positions 1–21 (MALLDLQAMDTPAEDSFGELR) are cleaved as a signal peptide. Cross-links (lanthionine (Ser-Cys)) lie at residues 24 to 31 (SQVSLLVC) and 34 to 41 (SSLSVVLC). 2,3-didehydroalanine (Ser) occurs at positions 27 and 37.

Belongs to the lanthionine-containing morphogen protein family. Post-translationally, maturation involves the enzymatic conversion of Ser into dehydrated AA and the formation of thioether bonds with cysteine. This is followed by membrane translocation and cleavage of the modified precursor.

Lanthionine-containing peptide devoid of antibiotic properties, involved in the formation of aerial mycelium. Suggested to self-assemble at air-water interfaces, thus providing a film of surfactant through which nascent aerial hyphae can emerge. The aerial hyphae differentiate further into spores. In Streptomyces griseus, this protein is Lanthionine-containing peptide SapB (ramS).